The primary structure comprises 390 residues: GTPase Obg (390 aa).

The Obg domain occupies Met-1–Leu-159. The segment at Asn-127–Gly-147 is disordered. A compositionally biased stretch (polar residues) spans Arg-129 to Thr-145. The 174-residue stretch at Ala-160–Ile-333 folds into the OBG-type G domain. GTP is bound by residues Gly-166–Ser-173, Phe-191–Val-195, Asp-213–Gly-216, Asn-283–Asp-286, and Ser-314–Ala-316. Residues Ser-173 and Thr-193 each coordinate Mg(2+).

The protein belongs to the TRAFAC class OBG-HflX-like GTPase superfamily. OBG GTPase family. As to quaternary structure, monomer. Mg(2+) is required as a cofactor.

It localises to the cytoplasm. An essential GTPase which binds GTP, GDP and possibly (p)ppGpp with moderate affinity, with high nucleotide exchange rates and a fairly low GTP hydrolysis rate. Plays a role in control of the cell cycle, stress response, ribosome biogenesis and in those bacteria that undergo differentiation, in morphogenesis control. The chain is GTPase Obg from Escherichia fergusonii (strain ATCC 35469 / DSM 13698 / CCUG 18766 / IAM 14443 / JCM 21226 / LMG 7866 / NBRC 102419 / NCTC 12128 / CDC 0568-73).